A 706-amino-acid chain; its full sequence is Termination factor NPH-I homolog (706 aa).

One can recognise a Helicase ATP-binding domain in the interval 62–227; it reads IGQGENTRGL…VPCFNMLSGR (166 aa). Residue 75 to 82 participates in ATP binding; that stretch reads HQMGMGKT. Residues 168–171 carry the DEAH box motif; it reads DEAH. The Helicase C-terminal domain maps to 417-599; it reads QCLQPLKVLE…HLNSAFRDLL (183 aa).

The protein belongs to the DEAD box helicase family. DEAH subfamily. Part of the viral DNA-directed RNA polymerase that consists of 8 polII-like subunits (RPB1, RPB2, RPB3, RPB5, RPB6, RPB7, RPB9, RPB10), a capping enzyme and a termination factor.

It is found in the virion. Functionally, putative DNA-dependent ATPase required for providing the needed energy to achieve the termination of early transcripts. This chain is Termination factor NPH-I homolog, found in Ornithodoros (relapsing fever ticks).